Consider the following 1641-residue polypeptide: Alpha-2-macroglobulin (1641 aa).

Positions 1-31 (MRDRVAMMLRPLVRGWIPRAVLLLTVAFSFG) are cleaved as a signal peptide. A lipid anchor (N-palmitoyl cysteine) is attached at cysteine 32. Residue cysteine 32 is the site of S-diacylglycerol cysteine attachment. Residues 1166-1169 (CAEQ) constitute a cross-link (isoglutamyl cysteine thioester (Cys-Gln)).

This sequence belongs to the protease inhibitor I39 (alpha-2-macroglobulin) family. Bacterial alpha-2-macroglobulin subfamily.

The protein localises to the cell membrane. Protects the bacterial cell from host peptidases. The polypeptide is Alpha-2-macroglobulin (Xylella fastidiosa (strain 9a5c)).